A 317-amino-acid polypeptide reads, in one-letter code: Terpene synthase 3 (317 aa).

The DDxx(x)D/E motif motif lies at 96–101; that stretch reads DDFYFE. Positions 223–231 match the NDxxSxxxD/E motif motif; sequence NDMVSFERE.

Belongs to the terpene synthase family.

Terpene synthase that converts its substrate farnesyl diphosphate (FPP) into the sesquiterpene CAS 137235-51-9 as a major product. Is also able to convert FPP into 9-epi-(E)-caryophyllene, alpha-neoclovene, beta-neoclovene, and 3 yet unidentified sesquiterpenes. The protein is Terpene synthase 3 of Dictyostelium purpureum (Slime mold).